Here is a 531-residue protein sequence, read N- to C-terminus: Dihydropyrimidinase (531 aa).

Positions 103, 105, and 193 each coordinate Zn(2+). K193 carries the post-translational modification N6-carboxylysine. Y198 provides a ligand contact to substrate. Zn(2+) is bound by residues H226 and H282. Residue S332 participates in substrate binding. D359 is a Zn(2+) binding site. N380 contributes to the substrate binding site.

This sequence belongs to the metallo-dependent hydrolases superfamily. Hydantoinase/dihydropyrimidinase family. Homotetramer. It depends on Zn(2+) as a cofactor. In terms of processing, carboxylation allows a single lysine to coordinate two zinc ions.

It localises to the endoplasmic reticulum. The catalysed reaction is 5,6-dihydrouracil + H2O = 3-(carbamoylamino)propanoate + H(+). The protein operates within amino-acid biosynthesis; beta-alanine biosynthesis. Its function is as follows. Catalyzes the second step of the reductive pyrimidine degradation, the reversible hydrolytic ring opening of dihydropyrimidines. Can catalyze the ring opening of 5,6-dihydrouracil to N-carbamoyl-alanine and of 5,6-dihydrothymine to N-carbamoyl-amino isobutyrate. Involved in the recycling of nitrogen from nucleobases to general nitrogen metabolism. This Arabidopsis thaliana (Mouse-ear cress) protein is Dihydropyrimidinase.